A 484-amino-acid chain; its full sequence is Glutamyl-tRNA(Gln) amidotransferase subunit A (484 aa).

Active-site charge relay system residues include Lys77 and Ser152. Ser176 serves as the catalytic Acyl-ester intermediate.

This sequence belongs to the amidase family. GatA subfamily. Heterotrimer of A, B and C subunits.

The catalysed reaction is L-glutamyl-tRNA(Gln) + L-glutamine + ATP + H2O = L-glutaminyl-tRNA(Gln) + L-glutamate + ADP + phosphate + H(+). In terms of biological role, allows the formation of correctly charged Gln-tRNA(Gln) through the transamidation of misacylated Glu-tRNA(Gln) in organisms which lack glutaminyl-tRNA synthetase. The reaction takes place in the presence of glutamine and ATP through an activated gamma-phospho-Glu-tRNA(Gln). The protein is Glutamyl-tRNA(Gln) amidotransferase subunit A of Lacticaseibacillus casei (strain BL23) (Lactobacillus casei).